Reading from the N-terminus, the 411-residue chain is Corticotropin-releasing factor receptor 2 (411 aa).

Positions 1-19 (MDAALLHSLLEANCSLALA) form a signal peptide, not cleaved. The Extracellular segment spans residues 1-108 (MDAALLHSLL…EPILDDKQRK (108 aa)). Residues Asn-13, Asn-41, Asn-74, Asn-86, and Asn-94 are each glycosylated (N-linked (GlcNAc...) asparagine). Disulfide bonds link Cys-14/Cys-50, Cys-40/Cys-83, Trp-51/Arg-77, and Cys-64/Cys-98. Residues 109–139 (YDLHYRIALVVNYLGHCVSVAALVAAFLLFL) traverse the membrane as a helical segment. Topologically, residues 140 to 146 (ALRSIRC) are cytoplasmic. Residues 147–171 (LRNVIHWNLITTFILRNVMWFLLQL) traverse the membrane as a helical segment. Topologically, residues 172–185 (VDHEVHESNEVWCR) are extracellular. Cys-184 and Cys-254 are joined by a disulfide. Residues 186–214 (CITTIFNYFVVTNFFWMFVEGCYLHTAIV) traverse the membrane as a helical segment. The Cytoplasmic portion of the chain corresponds to 215–221 (MTYSTER). A helical transmembrane segment spans residues 222–249 (LRKCLFLFIGWCIPFPIIVAWAIGKLYY). Residues 250 to 265 (ENEQCWFGKEPGDLVD) are Extracellular-facing. A helical membrane pass occupies residues 266-291 (YIYQGPIILVLLINFVFLFNIVRILM). Over 292 to 302 (TKLRASTTSET) the chain is Cytoplasmic. A helical membrane pass occupies residues 303 to 327 (IQYRKAVKATLVLLPLLGITYMLFF). The Extracellular segment spans residues 328–334 (VNPGEDD). Residues 335 to 364 (LSQIMFIYFNSFLQSFQGFFVSVFYCFFNG) form a helical membrane-spanning segment. Residues 365 to 411 (EVRSAVRKRWHRWQDHHSLRVPMARAMSIPTSPTRISFHSIKQTAAV) lie on the Cytoplasmic side of the membrane.

The protein belongs to the G-protein coupled receptor 2 family. As to quaternary structure, monomer. Interacts (via N-terminal extracellular domain) with CRF, UCN, UCN2 and UCN3. Has highest affinity for UCN, and considerably lower affinity for CRF, UNC2 and UCN3. An N-glycosylation site within the signal peptide impedes its proper cleavage and function.

Its subcellular location is the cell membrane. Its function is as follows. G-protein coupled receptor for CRH (corticotropin-releasing factor), UCN (urocortin), UCN2 and UCN3. Has high affinity for UCN. Ligand binding causes a conformation change that triggers signaling via guanine nucleotide-binding proteins (G proteins) and down-stream effectors, such as adenylate cyclase. Promotes the activation of adenylate cyclase, leading to increased intracellular cAMP levels. The polypeptide is Corticotropin-releasing factor receptor 2 (CRHR2) (Homo sapiens (Human)).